Here is a 387-residue protein sequence, read N- to C-terminus: tRNA-specific 2-thiouridylase MnmA (387 aa).

ATP contacts are provided by residues 34 to 41 and methionine 60; that span reads AMSGGVDS. Cysteine 127 acts as the Nucleophile in catalysis. Residues cysteine 127 and cysteine 223 are joined by a disulfide bond. Glycine 151 serves as a coordination point for ATP. Positions 173-175 are interaction with tRNA; sequence KDQ. Residue cysteine 223 is the Cysteine persulfide intermediate of the active site.

This sequence belongs to the MnmA/TRMU family.

The protein localises to the cytoplasm. It catalyses the reaction S-sulfanyl-L-cysteinyl-[protein] + uridine(34) in tRNA + AH2 + ATP = 2-thiouridine(34) in tRNA + L-cysteinyl-[protein] + A + AMP + diphosphate + H(+). Catalyzes the 2-thiolation of uridine at the wobble position (U34) of tRNA, leading to the formation of s(2)U34. The sequence is that of tRNA-specific 2-thiouridylase MnmA from Anaplasma marginale (strain St. Maries).